The chain runs to 365 residues: Chorismate synthase (365 aa).

Arg48 contacts NADP(+). FMN-binding positions include 125-127, 238-239, Gly278, 293-297, and Arg319; these read RSS, NA, and KPTSS.

Belongs to the chorismate synthase family. Homotetramer. It depends on FMNH2 as a cofactor.

The enzyme catalyses 5-O-(1-carboxyvinyl)-3-phosphoshikimate = chorismate + phosphate. It participates in metabolic intermediate biosynthesis; chorismate biosynthesis; chorismate from D-erythrose 4-phosphate and phosphoenolpyruvate: step 7/7. Functionally, catalyzes the anti-1,4-elimination of the C-3 phosphate and the C-6 proR hydrogen from 5-enolpyruvylshikimate-3-phosphate (EPSP) to yield chorismate, which is the branch point compound that serves as the starting substrate for the three terminal pathways of aromatic amino acid biosynthesis. This reaction introduces a second double bond into the aromatic ring system. This is Chorismate synthase from Ruthia magnifica subsp. Calyptogena magnifica.